Consider the following 432-residue polypeptide: Argininosuccinate lyase (432 aa).

This sequence belongs to the lyase 1 family. Argininosuccinate lyase subfamily.

Its subcellular location is the cytoplasm. The catalysed reaction is 2-(N(omega)-L-arginino)succinate = fumarate + L-arginine. It functions in the pathway amino-acid biosynthesis; L-arginine biosynthesis; L-arginine from L-ornithine and carbamoyl phosphate: step 3/3. This is Argininosuccinate lyase from Xanthomonas euvesicatoria pv. vesicatoria (strain 85-10) (Xanthomonas campestris pv. vesicatoria).